We begin with the raw amino-acid sequence, 206 residues long: Guanylate kinase (206 aa).

Residues 4 to 182 (ANLFIISAPS…AVQNLIHIIS (179 aa)) enclose the Guanylate kinase-like domain. 11–18 (APSGAGKT) is a binding site for ATP.

This sequence belongs to the guanylate kinase family.

It is found in the cytoplasm. The enzyme catalyses GMP + ATP = GDP + ADP. Functionally, essential for recycling GMP and indirectly, cGMP. This is Guanylate kinase from Coxiella burnetii (strain RSA 493 / Nine Mile phase I).